A 236-amino-acid polypeptide reads, in one-letter code: 7-cyano-7-deazaguanine synthase (236 aa).

An ATP-binding site is contributed by 12–22 (FSGGQDSTTCL). Zn(2+) is bound by residues Cys-200, Cys-215, Cys-218, and Cys-221.

The protein belongs to the QueC family. Requires Zn(2+) as cofactor.

The enzyme catalyses 7-carboxy-7-deazaguanine + NH4(+) + ATP = 7-cyano-7-deazaguanine + ADP + phosphate + H2O + H(+). Its pathway is purine metabolism; 7-cyano-7-deazaguanine biosynthesis. Functionally, catalyzes the ATP-dependent conversion of 7-carboxy-7-deazaguanine (CDG) to 7-cyano-7-deazaguanine (preQ(0)). The chain is 7-cyano-7-deazaguanine synthase from Bradyrhizobium sp. (strain ORS 278).